The sequence spans 160 residues: Cytochrome b6-f complex subunit 4 (160 aa).

Transmembrane regions (helical) follow at residues 36–56 (LLYI…GLAV), 95–115 (LLGV…PFLE), and 131–151 (TVFL…TLPI).

The protein belongs to the cytochrome b family. PetD subfamily. In terms of assembly, the 4 large subunits of the cytochrome b6-f complex are cytochrome b6, subunit IV (17 kDa polypeptide, petD), cytochrome f and the Rieske protein, while the 4 small subunits are petG, petL, petM and petN. The complex functions as a dimer.

It is found in the plastid. It localises to the chloroplast thylakoid membrane. Component of the cytochrome b6-f complex, which mediates electron transfer between photosystem II (PSII) and photosystem I (PSI), cyclic electron flow around PSI, and state transitions. This is Cytochrome b6-f complex subunit 4 from Lotus japonicus (Lotus corniculatus var. japonicus).